We begin with the raw amino-acid sequence, 207 residues long: Cytochrome c oxidase subunit 3 (207 aa).

The next 5 helical transmembrane spans lie at 28–48, 70–90, 102–122, 144–164, and 186–206; these read FLGF…LFAT, VVFM…YAIY, LWFG…IYEF, LVGT…TLMI, and WHFI…MGMV.

This sequence belongs to the cytochrome c oxidase subunit 3 family.

It localises to the cell membrane. It carries out the reaction 4 Fe(II)-[cytochrome c] + O2 + 8 H(+)(in) = 4 Fe(III)-[cytochrome c] + 2 H2O + 4 H(+)(out). The polypeptide is Cytochrome c oxidase subunit 3 (ctaE) (Bacillus sp. (strain PS3)).